The primary structure comprises 376 residues: Probable dual-specificity RNA methyltransferase RlmN (376 aa).

Catalysis depends on E96, which acts as the Proton acceptor. Residues 102–346 (YPDRSTVCVS…CTVRVERGVE (245 aa)) enclose the Radical SAM core domain. C109 and C351 are disulfide-bonded. [4Fe-4S] cluster contacts are provided by C116, C120, and C123. Residues 171 to 172 (GE), S203, 226 to 228 (SLH), and N308 contribute to the S-adenosyl-L-methionine site. C351 functions as the S-methylcysteine intermediate in the catalytic mechanism.

Belongs to the radical SAM superfamily. RlmN family. It depends on [4Fe-4S] cluster as a cofactor.

It localises to the cytoplasm. It catalyses the reaction adenosine(2503) in 23S rRNA + 2 reduced [2Fe-2S]-[ferredoxin] + 2 S-adenosyl-L-methionine = 2-methyladenosine(2503) in 23S rRNA + 5'-deoxyadenosine + L-methionine + 2 oxidized [2Fe-2S]-[ferredoxin] + S-adenosyl-L-homocysteine. The catalysed reaction is adenosine(37) in tRNA + 2 reduced [2Fe-2S]-[ferredoxin] + 2 S-adenosyl-L-methionine = 2-methyladenosine(37) in tRNA + 5'-deoxyadenosine + L-methionine + 2 oxidized [2Fe-2S]-[ferredoxin] + S-adenosyl-L-homocysteine. In terms of biological role, specifically methylates position 2 of adenine 2503 in 23S rRNA and position 2 of adenine 37 in tRNAs. This chain is Probable dual-specificity RNA methyltransferase RlmN, found in Chloroflexus aurantiacus (strain ATCC 29366 / DSM 635 / J-10-fl).